Reading from the N-terminus, the 322-residue chain is Undecaprenyl-phosphate 4-deoxy-4-formamido-L-arabinose transferase (322 aa).

At Met1–Met235 the chain is on the cytoplasmic side. A helical membrane pass occupies residues Leu236–Ile256. The Periplasmic portion of the chain corresponds to Leu257–Gly269. Residues Val270–Leu290 traverse the membrane as a helical segment. The Cytoplasmic segment spans residues Leu291–Glu322.

It belongs to the glycosyltransferase 2 family.

The protein localises to the cell inner membrane. The catalysed reaction is UDP-4-deoxy-4-formamido-beta-L-arabinose + di-trans,octa-cis-undecaprenyl phosphate = 4-deoxy-4-formamido-alpha-L-arabinopyranosyl di-trans,octa-cis-undecaprenyl phosphate + UDP. Its pathway is glycolipid biosynthesis; 4-amino-4-deoxy-alpha-L-arabinose undecaprenyl phosphate biosynthesis; 4-amino-4-deoxy-alpha-L-arabinose undecaprenyl phosphate from UDP-4-deoxy-4-formamido-beta-L-arabinose and undecaprenyl phosphate: step 1/2. The protein operates within bacterial outer membrane biogenesis; lipopolysaccharide biosynthesis. Functionally, catalyzes the transfer of 4-deoxy-4-formamido-L-arabinose from UDP to undecaprenyl phosphate. The modified arabinose is attached to lipid A and is required for resistance to polymyxin and cationic antimicrobial peptides. The chain is Undecaprenyl-phosphate 4-deoxy-4-formamido-L-arabinose transferase from Escherichia coli O7:K1 (strain IAI39 / ExPEC).